The following is a 2788-amino-acid chain: E3 ubiquitin-protein ligase UBR5 (2788 aa).

A compositionally biased stretch (basic and acidic residues) spans 68-78; it reads RLELGKPDNND. Positions 68 to 165 are disordered; sequence RLELGKPDNN…DRGSGLLGSQ (98 aa). A compositionally biased stretch (low complexity) spans 84–101; sequence SSSGTGRTSRPGRTSDSP. Ser100 carries the post-translational modification Phosphoserine. The span at 125-134 shows a compositional bias: gly residues; the sequence is GVGGSGGGSS. The 43-residue stretch at 174-216 folds into the UBA domain; that stretch reads VIPEELISQAQVVLQGKSRSVIIRELQRTNLDVNLAVNNLLSR. Residue Ser317 is modified to Phosphoserine. Residues 318 to 337 show a composition bias toward basic and acidic residues; it reads FDNERGSTSKEGEPNPDKKN. Residues 318–343 form a disordered region; the sequence is FDNERGSTSKEGEPNPDKKNTPVQSP. 2 positions are modified to phosphoserine: Ser342 and Ser567. Over residues 572-593 the composition is skewed to basic and acidic residues; that stretch reads KSMEKASKTIETKPESKQEPVK. The tract at residues 572-636 is disordered; the sequence is KSMEKASKTI…PAPKEEEKVN (65 aa). Position 601 is a phosphoserine (Ser601). The segment covering 603–617 has biased composition (low complexity); that stretch reads ASTCSDASSIASSAS. Residue Thr626 is modified to Phosphothreonine. 3 positions are modified to phosphoserine: Ser797, Ser917, and Ser1007. 2 disordered regions span residues 988–1024 and 1041–1064; these read AGLGRHEAGASSSDHQDPVSPPIAPPSWVPDPPSMDP and TAATGGGQGPSTSTIPGPSTEPSV. The span at 1006-1022 shows a compositional bias: pro residues; sequence VSPPIAPPSWVPDPPSM. Residues 1050 to 1062 are compositionally biased toward polar residues; that stretch reads PSTSTIPGPSTEP. Phosphothreonine is present on residues Thr1104 and Thr1124. The UBR-type zinc-finger motif lies at 1166-1234; that stretch reads DTCSFTWTGA…EKCKCKTLIA (69 aa). Residues Ser1216, Ser1297, Ser1344, Ser1364, and Ser1470 each carry the phosphoserine modification. The disordered stretch occupies residues 1288–1308; the sequence is REDRNRKTASPDDSDMPDHDL. The interval 1504 to 1729 is disordered; it reads SVEPLPPRPS…PSSTSTPAAS (226 aa). Residues 1513–1526 are compositionally biased toward low complexity; the sequence is SSDQSSSSSQSQSS. Residues 1527-1542 are compositionally biased toward polar residues; sequence YIIRNPQQRRISQSQP. At Ser1538 the chain carries Phosphoserine. 2 stretches are compositionally biased toward acidic residues: residues 1548–1563 and 1594–1603; these read EEQDDIVSADVEEVEV and HDEDGSDMEL. The span at 1618–1627 shows a compositional bias: polar residues; that stretch reads NHSNQDNASG. Low complexity-rich tracts occupy residues 1630–1646, 1657–1670, and 1715–1729; these read SVVTAATAGSEAGASSV, SNDSSDSDSSSSQS, and AASTAPSSTSTPAAS. Thr1725 is modified (phosphothreonine). Ser1730 is modified (phosphoserine). Tyr1735 bears the Phosphotyrosine mark. Ser1769 is subject to Phosphoserine. A disordered region spans residues 1848 to 1881; that stretch reads LASAGDPGHPNHPLHASQNSARRERMTAREEASL. Basic and acidic residues predominate over residues 1868-1881; that stretch reads ARRERMTAREEASL. A Phosphothreonine modification is found at Thr1959. Residues 1974–2011 form a disordered region; the sequence is GIDNEDSEHENDDDTSQSATLNDKDDESLPAETGQNHP. Residues 1975–1988 show a composition bias toward acidic residues; it reads IDNEDSEHENDDDT. Phosphoserine is present on residues Ser1980, Ser2016, and Ser2018. At Thr2020 the chain carries Phosphothreonine. Ser2066 bears the Phosphoserine mark. The disordered stretch occupies residues 2106–2132; that stretch reads NRQKKAGEDQSMLAEEADSSKPGPSAH. Thr2203 carries the post-translational modification Phosphothreonine. Phosphoserine is present on residues Ser2231 and Ser2279. The segment at 2313–2383 is disordered; the sequence is HTSLMQRLRN…SDDPDPLPAH (71 aa). Composition is skewed to basic and acidic residues over residues 2322-2338 and 2346-2358; these read NRGERDREREREREMRR and SRRDRDRDFRRQL. The PABC domain occupies 2367–2444; the sequence is PASEGNPSDD…AMELIVAHGR (78 aa). The 338-residue stretch at 2451–2788 folds into the HECT domain; the sequence is ILDLGLLDSS…AIKTKNFGFV (338 aa). Residues Ser2459, Ser2473, and Ser2475 each carry the phosphoserine modification. The segment at 2463–2490 is disordered; it reads VQENRKRHGSSRSVVDMDLDDTDDGDDN. Residues 2479-2489 show a composition bias toward acidic residues; sequence MDLDDTDDGDD. Cys2757 (glycyl thioester intermediate) is an active-site residue.

This sequence belongs to the UBR5 family. In terms of assembly, homotetramer; composed of a dimer of dimers. Associates with CDK9 and TFIIS/TCEA1 and forms a transcription regulatory complex made of CDK9, RNAP II, UBR5 and TFIIS/TCEA1 that can stimulate target gene transcription (e.g. gamma fibrinogen/FGG) by recruiting their promoters. Associates with the E3 ligase complex containing DYRK2, EDD/UBR5, DDB1 and DCAF1 proteins (EDVP complex). Binds TOPBP1. Interacts with PIH1D1. Interacts with CIB1. Highest levels found in testis. Also present in liver, kidney, lung and brain.

It is found in the nucleus. The protein resides in the cytoplasm. The enzyme catalyses S-ubiquitinyl-[E2 ubiquitin-conjugating enzyme]-L-cysteine + [acceptor protein]-L-lysine = [E2 ubiquitin-conjugating enzyme]-L-cysteine + N(6)-ubiquitinyl-[acceptor protein]-L-lysine.. It functions in the pathway protein modification; protein ubiquitination. Its function is as follows. E3 ubiquitin-protein ligase involved in different protein quality control pathways in the cytoplasm and nucleus. Mainly acts as a ubiquitin chain elongator that extends pre-ubiquitinated substrates. Component of the N-end rule pathway: ubiquitinates proteins bearing specific N-terminal residues that are destabilizing according to the N-end rule, leading to their degradation. Recognizes type-1 N-degrons, containing positively charged amino acids (Arg, Lys and His). Together with UBR4, part of a cytoplasm protein quality control pathway that prevents protein aggregation by catalyzing assembly of heterotypic 'Lys-11'-/'Lys-48'-linked branched ubiquitin chains on aggregated proteins, leading to substrate recognition by the segregase p97/VCP and degradation by the proteasome: UBR5 is probably branching multiple 'Lys-48'-linked chains of substrates initially modified with mixed conjugates by UBR4. Together with ITCH, catalyzes 'Lys-48'-/'Lys-63'-branched ubiquitination of TXNIP, leading to its degradation: UBR5 mediates branching of 'Lys-48'-linked chains of substrates initially modified with 'Lys-63'-linked conjugates by ITCH. Catalytic component of a nuclear protein quality control pathway that mediates ubiquitination and degradation of unpaired transcription factors (i.e. transcription factors that are not assembled into functional multiprotein complexes): specifically recognizes and binds degrons that are not accessible when transcription regulators are associated with their coactivators. Ubiquitinates various unpaired transcription regulator (MYC, SUPT4H1, SUPT5H, CDC20 and MCRS1), as well as ligand-bound nuclear receptors (ESR1, NR1H3, NR3C1, PGR, RARA, RXRA AND VDR) that are not associated with their nuclear receptor coactivators (NCOAs). Involved in maturation and/or transcriptional regulation of mRNA by mediating polyubiquitination and activation of CDK9. Also acts as a regulator of DNA damage response by acting as a suppressor of RNF168, an E3 ubiquitin-protein ligase that promotes accumulation of 'Lys-63'-linked histone H2A and H2AX at DNA damage sites, thereby acting as a guard against excessive spreading of ubiquitinated chromatin at damaged chromosomes. Regulates DNA topoisomerase II binding protein (TopBP1) in the DNA damage response. Ubiquitinates acetylated PCK1. Acts as a positive regulator of the canonical Wnt signaling pathway by mediating (1) ubiquitination and stabilization of CTNNB1, and (2) 'Lys-48'-linked ubiquitination and degradation of TLE3. Promotes disassembly of the mitotic checkpoint complex (MCC) from the APC/C complex by catalyzing ubiquitination of BUB1B, BUB3 and CDC20. Plays an essential role in extraembryonic development. Required for the maintenance of skeletal tissue homeostasis by acting as an inhibitor of hedgehog (HH) signaling. This is E3 ubiquitin-protein ligase UBR5 (Ubr5) from Rattus norvegicus (Rat).